Here is a 137-residue protein sequence, read N- to C-terminus: Nucleoside diphosphate kinase (137 aa).

ATP contacts are provided by lysine 9, phenylalanine 57, arginine 85, threonine 91, arginine 102, and asparagine 112. The active-site Pros-phosphohistidine intermediate is the histidine 115.

The protein belongs to the NDK family. In terms of assembly, homotetramer. Requires Mg(2+) as cofactor.

It is found in the cytoplasm. The catalysed reaction is a 2'-deoxyribonucleoside 5'-diphosphate + ATP = a 2'-deoxyribonucleoside 5'-triphosphate + ADP. It catalyses the reaction a ribonucleoside 5'-diphosphate + ATP = a ribonucleoside 5'-triphosphate + ADP. Major role in the synthesis of nucleoside triphosphates other than ATP. The ATP gamma phosphate is transferred to the NDP beta phosphate via a ping-pong mechanism, using a phosphorylated active-site intermediate. The chain is Nucleoside diphosphate kinase from Pelobacter propionicus (strain DSM 2379 / NBRC 103807 / OttBd1).